Reading from the N-terminus, the 128-residue chain is Large ribosomal subunit protein uL22 (128 aa).

The protein belongs to the universal ribosomal protein uL22 family. In terms of assembly, part of the 50S ribosomal subunit.

In terms of biological role, this protein binds specifically to 23S rRNA; its binding is stimulated by other ribosomal proteins, e.g. L4, L17, and L20. It is important during the early stages of 50S assembly. It makes multiple contacts with different domains of the 23S rRNA in the assembled 50S subunit and ribosome. Functionally, the globular domain of the protein is located near the polypeptide exit tunnel on the outside of the subunit, while an extended beta-hairpin is found that lines the wall of the exit tunnel in the center of the 70S ribosome. The polypeptide is Large ribosomal subunit protein uL22 (Prochlorococcus marinus subsp. pastoris (strain CCMP1986 / NIES-2087 / MED4)).